Consider the following 95-residue polypeptide: Small ribosomal subunit protein uS19 (95 aa).

This sequence belongs to the universal ribosomal protein uS19 family.

Protein S19 forms a complex with S13 that binds strongly to the 16S ribosomal RNA. The polypeptide is Small ribosomal subunit protein uS19 (Coxiella burnetii (strain CbuK_Q154) (Coxiella burnetii (strain Q154))).